A 124-amino-acid polypeptide reads, in one-letter code: BLOC-1-related complex subunit 8 (124 aa).

The disordered stretch occupies residues 102–124; that stretch reads SSSQGRSAVINPNETPAHTSVTP.

This sequence belongs to the BORCS8 family.

The protein localises to the lysosome membrane. Functionally, as part of a BORC-like complex, it may play a role in the movement and localization of lysosomes at the cell periphery. Associated with the cytosolic face of lysosomes, this complex may couple lysosomes to microtubule plus-end-directed kinesin motors, driving lysosome movement toward the cell periphery. The protein is BLOC-1-related complex subunit 8 of Danio rerio (Zebrafish).